Consider the following 594-residue polypeptide: Glutamate decarboxylase 1 (594 aa).

Positions 1–13 (MASSTPSSSATSS) are enriched in low complexity. The tract at residues 1-25 (MASSTPSSSATSSNAGPDPNTTNLR) is disordered. S78 is subject to Phosphoserine. A 4-aminobutanoate-binding site is contributed by 190–192 (QLS). K405 is subject to N6-(pyridoxal phosphate)lysine. R567 is a 4-aminobutanoate binding site.

This sequence belongs to the group II decarboxylase family. In terms of assembly, homodimer. It depends on pyridoxal 5'-phosphate as a cofactor.

It catalyses the reaction L-glutamate + H(+) = 4-aminobutanoate + CO2. Its function is as follows. Catalyzes the synthesis of the inhibitory neurotransmitter gamma-aminobutyric acid (GABA) with pyridoxal 5'-phosphate as cofactor. This Sus scrofa (Pig) protein is Glutamate decarboxylase 1 (GAD1).